Here is a 206-residue protein sequence, read N- to C-terminus: Large ribosomal subunit protein uL4 (206 aa).

This sequence belongs to the universal ribosomal protein uL4 family. Part of the 50S ribosomal subunit.

Its function is as follows. One of the primary rRNA binding proteins, this protein initially binds near the 5'-end of the 23S rRNA. It is important during the early stages of 50S assembly. It makes multiple contacts with different domains of the 23S rRNA in the assembled 50S subunit and ribosome. In terms of biological role, forms part of the polypeptide exit tunnel. The sequence is that of Large ribosomal subunit protein uL4 from Nitrobacter winogradskyi (strain ATCC 25391 / DSM 10237 / CIP 104748 / NCIMB 11846 / Nb-255).